Reading from the N-terminus, the 318-residue chain is Bis(5'-nucleosyl)-tetraphosphatase, symmetrical (318 aa).

The interval 269 to 318 is disordered; sequence PGREVTGPAPVARAPRRPRERLGRQRSRGNRGNAGNTAVPAKPQVDTPQD. Basic residues predominate over residues 282 to 297; that stretch reads APRRPRERLGRQRSRG.

The protein belongs to the Ap4A hydrolase family.

The catalysed reaction is P(1),P(4)-bis(5'-adenosyl) tetraphosphate + H2O = 2 ADP + 2 H(+). In terms of biological role, hydrolyzes diadenosine 5',5'''-P1,P4-tetraphosphate to yield ADP. The chain is Bis(5'-nucleosyl)-tetraphosphatase, symmetrical from Xanthomonas oryzae pv. oryzae (strain KACC10331 / KXO85).